Reading from the N-terminus, the 407-residue chain is MEKALNITSEIGKLQTVLVKRPGSELENITPEYLESLLFDDIPYLKMMQKEHDFFVKRMQDSNIEVLYLEKLAAEALRKAGNKETFLTKMINESNQMDESALYVRDYLMSFNEEEMIRKLMAGLKKSEIPERKKKHLNEMMSEQYPFFLDPLPNLYFTRDPAAVIGSGVTINKMFQPARRRESIFIELILKHHPRFSNQEVPIWSGREEPFSLEGGDELVLNEETVIVGVSERTDARAVERLAESLFARAPKIKKVLAVEIPETRSFMHLDTVFTMVSDAQFTIHPAIQNQQGELNVYILEKGKNGLEITPRRDFRRVIAEVLEVPEVEFIPCGGEDVIVSAREQWNDGANTLAIAPGEVITYDRNQVSNDLLRRAGIKVHEVISSELSRGRGGPRCMTMPLVRENL.

Residue C397 is the Amidino-cysteine intermediate of the active site.

The protein belongs to the arginine deiminase family.

It localises to the cytoplasm. The catalysed reaction is L-arginine + H2O = L-citrulline + NH4(+). It participates in amino-acid degradation; L-arginine degradation via ADI pathway; carbamoyl phosphate from L-arginine: step 1/2. In Listeria welshimeri serovar 6b (strain ATCC 35897 / DSM 20650 / CCUG 15529 / CIP 8149 / NCTC 11857 / SLCC 5334 / V8), this protein is Arginine deiminase.